The primary structure comprises 458 residues: N-acetylgalactosamine kinase (458 aa).

4 residues coordinate alpha-D-galactose: arginine 43, glutamate 49, histidine 50, and aspartate 52. ATP-binding residues include glycine 143, serine 145, and serine 146. Aspartate 190 serves as a coordination point for alpha-D-galactose. Catalysis depends on aspartate 190, which acts as the Proton acceptor. 2 residues coordinate ATP: asparagine 233 and lysine 234.

Belongs to the GHMP kinase family. GalK subfamily. In terms of assembly, monomer.

It carries out the reaction N-acetyl-alpha-D-galactosamine + ATP = N-acetyl-alpha-D-galactosamine 1-phosphate + ADP + H(+). Its function is as follows. Acts on GalNAc. Also acts as a galactokinase when galactose is present at high concentrations. The chain is N-acetylgalactosamine kinase (GALK2) from Pongo abelii (Sumatran orangutan).